The following is a 340-amino-acid chain: CMP-N-acetylneuraminate-beta-galactosamide-alpha-2,3-sialyltransferase 1 (340 aa).

Topologically, residues 1 to 13 (MVTLRKRTLKVLT) are cytoplasmic. Residues 14-34 (FLVLFIFLTSFFLNYSHTMVA) traverse the membrane as a helical; Signal-anchor for type II membrane protein segment. The Lumenal portion of the chain corresponds to 35-340 (TTWFPKQMVL…INKIRIFKGR (306 aa)). Cystine bridges form between C59-C64, C61-C139, and C142-C281. N-linked (GlcNAc...) asparagine glycosylation occurs at N79. Q105 contacts substrate. The N-linked (GlcNAc...) asparagine glycan is linked to N114. Substrate is bound by residues N147 and N170. A glycan (N-linked (GlcNAc...) asparagine) is linked at N201. Y230, Y266, G270, G290, H299, and H316 together coordinate substrate. N-linked (GlcNAc...) asparagine glycosylation occurs at N323.

Belongs to the glycosyltransferase 29 family. Post-translationally, the soluble form derives from the membrane form by proteolytic processing. Expressed in several tissues. Highest expression in lung, liver, skeletal muscle, kidney, pancreas, spleen and placenta.

It localises to the golgi apparatus. It is found in the golgi stack membrane. The protein resides in the trans-Golgi network membrane. The protein localises to the secreted. The catalysed reaction is a beta-D-galactosyl-(1-&gt;3)-N-acetyl-alpha-D-galactosaminyl derivative + CMP-N-acetyl-beta-neuraminate = an N-acetyl-alpha-neuraminyl-(2-&gt;3)-beta-D-galactosyl-(1-&gt;3)-N-acetyl-alpha-D-galactosaminyl derivative + CMP + H(+). It catalyses the reaction a ganglioside GM1 + CMP-N-acetyl-beta-neuraminate = a ganglioside GD1a + CMP + H(+). It carries out the reaction a ganglioside GM1 (d18:1(4E)) + CMP-N-acetyl-beta-neuraminate = a ganglioside GD1a (d18:1(4E)) + CMP + H(+). The enzyme catalyses ganglioside GM1 (d18:1(4E)/18:0) + CMP-N-acetyl-beta-neuraminate = ganglioside GD1a (18:1(4E)/18:0) + CMP + H(+). The catalysed reaction is a ganglioside GA1 + CMP-N-acetyl-beta-neuraminate = a ganglioside GM1b + CMP + H(+). It catalyses the reaction a ganglioside GA1 (d18:1(4E)) + CMP-N-acetyl-beta-neuraminate = a ganglioside GM1b (d18:1(4E)) + CMP + H(+). It carries out the reaction a ganglioside GD1b + CMP-N-acetyl-beta-neuraminate = a ganglioside GT1b + CMP + H(+). The enzyme catalyses a 3-O-[beta-D-galactosyl-(1-&gt;3)-N-acetyl-alpha-D-galactosaminyl]-L-threonyl-[protein] + CMP-N-acetyl-beta-neuraminate = a 3-O-[N-acetyl-alpha-neuraminyl-(2-&gt;3)-beta-D-galactosyl-(1-&gt;3)-N-acetyl-alpha-D-galactosaminyl]-L-threonyl-[protein] + CMP + H(+). The catalysed reaction is a 3-O-[beta-D-galactosyl-(1-&gt;3)-N-acetyl-alpha-D-galactosaminyl]-L-seryl-[protein] + CMP-N-acetyl-beta-neuraminate = 3-O-[N-acetyl-alpha-neuraminyl-(2-&gt;3)-beta-D-galactosyl-(1-&gt;3)-N-acetyl-alpha-D-galactosaminyl]-L-seryl-[protein] + CMP + H(+). It participates in protein modification; protein glycosylation. It functions in the pathway glycolipid biosynthesis. A beta-galactoside alpha2-&gt;3 sialyltransferase involved in terminal sialylation of glycoproteins and glycolipids. Catalyzes the transfer of sialic acid (N-acetyl-neuraminic acid; Neu5Ac) from the nucleotide sugar donor CMP-Neu5Ac onto acceptor Galbeta-(1-&gt;3)-GalNAc-terminated glycoconjugates through an alpha2-3 linkage. Adds sialic acid to the core 1 O-glycan, Galbeta-(1-&gt;3)-GalNAc-O-Ser/Thr, which is a major structure of mucin-type O-glycans. As part of a homeostatic mechanism that regulates CD8-positive T cell numbers, sialylates core 1 O-glycans of T cell glycoproteins, SPN/CD43 and PTPRC/CD45. Prevents premature apoptosis of thymic CD8-positive T cells prior to peripheral emigration, whereas in the secondary lymphoid organs controls the survival of CD8-positive memory T cells generated following a successful immune response. Transfers sialic acid to asialofetuin, presumably onto Galbeta-(1-&gt;3)-GalNAc-O-Ser. Sialylates GM1a, GA1 and GD1b gangliosides to form GD1a, GM1b and GT1b, respectively. The polypeptide is CMP-N-acetylneuraminate-beta-galactosamide-alpha-2,3-sialyltransferase 1 (Homo sapiens (Human)).